Consider the following 361-residue polypeptide: Phospho-N-acetylmuramoyl-pentapeptide-transferase (361 aa).

A run of 10 helical transmembrane segments spans residues 26 to 46, 73 to 93, 98 to 118, 139 to 159, 168 to 188, 200 to 220, 237 to 257, 264 to 284, 289 to 309, and 339 to 359; these read SILAALTALFLSLWIGPVLIQ, TMGGSLILMTVTLSVLLWGDL, VWLVLVVMLAFGAIGWYDDWI, IFGLAAGLFLYFTADVPAAVT, IALPLTSISFVAITYFWIVGF, GLAIMPTVLVACALGVFAYAS, AGDLIIICAAIAGAGLGFLWF, VFMGDIGALALGAVLGTIAVI, LVLVVMGGVFVIETLSVIIQV, and VIVRFWIISVVLVLVGLATLK.

It belongs to the glycosyltransferase 4 family. MraY subfamily. Mg(2+) is required as a cofactor.

It localises to the cell inner membrane. The enzyme catalyses UDP-N-acetyl-alpha-D-muramoyl-L-alanyl-gamma-D-glutamyl-meso-2,6-diaminopimeloyl-D-alanyl-D-alanine + di-trans,octa-cis-undecaprenyl phosphate = di-trans,octa-cis-undecaprenyl diphospho-N-acetyl-alpha-D-muramoyl-L-alanyl-D-glutamyl-meso-2,6-diaminopimeloyl-D-alanyl-D-alanine + UMP. It functions in the pathway cell wall biogenesis; peptidoglycan biosynthesis. Functionally, catalyzes the initial step of the lipid cycle reactions in the biosynthesis of the cell wall peptidoglycan: transfers peptidoglycan precursor phospho-MurNAc-pentapeptide from UDP-MurNAc-pentapeptide onto the lipid carrier undecaprenyl phosphate, yielding undecaprenyl-pyrophosphoryl-MurNAc-pentapeptide, known as lipid I. This chain is Phospho-N-acetylmuramoyl-pentapeptide-transferase, found in Xylella fastidiosa (strain M12).